The primary structure comprises 170 residues: Brassinosteroid-responsive RING protein 1 (170 aa).

A helical membrane pass occupies residues 15–37 (LFVQTLSILGFIRTIVFSIFRFL). The RING-type; atypical zinc-finger motif lies at 94 to 137 (CAVCLYEFEGEQEIRWLRNCRHIFHRSCLDRWMDHDQKTCPLCR).

Belongs to the RING-type zinc finger family. In terms of tissue distribution, highly expressed in stems, rosette leaves and siliques, and moderately expressed in roots, cauline leaves and flower. Detected at low levels in seeds.

The protein resides in the membrane. Functionally, may be involved in the brassinosteroids (BRs) signaling pathway and regulate the growth and development of rosette leaves. Seems to prevent over development of leaves and inflorescence stems. This Arabidopsis thaliana (Mouse-ear cress) protein is Brassinosteroid-responsive RING protein 1.